Here is a 295-residue protein sequence, read N- to C-terminus: Tyrosine transport system permease protein (295 aa).

8 consecutive transmembrane segments (helical) span residues 3–23 (GIIS…GVYI), 57–77 (VVAT…TGIL), 81–101 (FKIS…SINL), 122–142 (ISPI…LDLF), 173–193 (ILGL…MAQF), 200–220 (NMGI…ITLF), 232–252 (IIVG…LGML), and 256–276 (LKLI…LNIS).

This sequence belongs to the binding-protein-dependent transport system permease family. The complex is probably composed of two ATP-binding proteins (CDR20291_0806), two transmembrane proteins (CDR20291_0807) and a solute-binding protein (CDR20291_0805).

Its subcellular location is the cell membrane. Functionally, probably part of an ABC transporter complex involved in tyrosine uptake. May also import phenylalanine. Probably responsible for the translocation of the substrate across the membrane. The sequence is that of Tyrosine transport system permease protein from Clostridioides difficile (strain R20291) (Peptoclostridium difficile).